A 205-amino-acid polypeptide reads, in one-letter code: Holliday junction branch migration complex subunit RuvA (205 aa).

The domain I stretch occupies residues 1–62 (MFEYVTGYVE…EDIMALYGFK (62 aa)). Residues 63 to 141 (TREERLLFTK…DVVPDAFVDL (79 aa)) are domain II. The segment at 142 to 152 (FSDEERFDEKK) is flexible linker. The domain III stretch occupies residues 153–205 (GSSAELDEALEALRALGYAEREVSRVVPELLKESLTTDQYIKKALSLLLNGKR).

This sequence belongs to the RuvA family. Homotetramer. Forms an RuvA(8)-RuvB(12)-Holliday junction (HJ) complex. HJ DNA is sandwiched between 2 RuvA tetramers; dsDNA enters through RuvA and exits via RuvB. An RuvB hexamer assembles on each DNA strand where it exits the tetramer. Each RuvB hexamer is contacted by two RuvA subunits (via domain III) on 2 adjacent RuvB subunits; this complex drives branch migration. In the full resolvosome a probable DNA-RuvA(4)-RuvB(12)-RuvC(2) complex forms which resolves the HJ.

The protein localises to the cytoplasm. The RuvA-RuvB-RuvC complex processes Holliday junction (HJ) DNA during genetic recombination and DNA repair, while the RuvA-RuvB complex plays an important role in the rescue of blocked DNA replication forks via replication fork reversal (RFR). RuvA specifically binds to HJ cruciform DNA, conferring on it an open structure. The RuvB hexamer acts as an ATP-dependent pump, pulling dsDNA into and through the RuvAB complex. HJ branch migration allows RuvC to scan DNA until it finds its consensus sequence, where it cleaves and resolves the cruciform DNA. This Bacillus cereus (strain AH187) protein is Holliday junction branch migration complex subunit RuvA.